The following is a 364-amino-acid chain: Histidinol-phosphate aminotransferase (364 aa).

Lys-222 carries the post-translational modification N6-(pyridoxal phosphate)lysine.

It belongs to the class-II pyridoxal-phosphate-dependent aminotransferase family. Histidinol-phosphate aminotransferase subfamily. As to quaternary structure, homodimer. Pyridoxal 5'-phosphate serves as cofactor.

The catalysed reaction is L-histidinol phosphate + 2-oxoglutarate = 3-(imidazol-4-yl)-2-oxopropyl phosphate + L-glutamate. It participates in amino-acid biosynthesis; L-histidine biosynthesis; L-histidine from 5-phospho-alpha-D-ribose 1-diphosphate: step 7/9. The protein is Histidinol-phosphate aminotransferase of Brevibacillus brevis (strain 47 / JCM 6285 / NBRC 100599).